Reading from the N-terminus, the 1091-residue chain is Error-prone DNA polymerase (1091 aa).

The segment at 1–51 is disordered; it reads MGWSNGPPSWAEMERVLNGKPRHAGVPAFDADGDVPRSRKRGAYQPPGRER.

The protein belongs to the DNA polymerase type-C family. DnaE2 subfamily.

The protein localises to the cytoplasm. It carries out the reaction DNA(n) + a 2'-deoxyribonucleoside 5'-triphosphate = DNA(n+1) + diphosphate. Functionally, DNA polymerase involved in damage-induced mutagenesis and translesion synthesis (TLS). It is not the major replicative DNA polymerase. This is Error-prone DNA polymerase from Mycobacterium bovis (strain ATCC BAA-935 / AF2122/97).